The sequence spans 442 residues: tRNA-2-methylthio-N(6)-dimethylallyladenosine synthase (442 aa).

Residues 3–120 (KKLYIETHGC…LPEMIDAARI (118 aa)) enclose the MTTase N-terminal domain. [4Fe-4S] cluster-binding residues include cysteine 12, cysteine 49, cysteine 83, cysteine 157, cysteine 161, and cysteine 164. The Radical SAM core domain occupies 143–375 (RIDGPSAYVS…QHRLNQQGFE (233 aa)). One can recognise a TRAM domain in the interval 378–442 (RQMVGSVQRI…PHSLRGSLIQ (65 aa)).

This sequence belongs to the methylthiotransferase family. MiaB subfamily. As to quaternary structure, monomer. [4Fe-4S] cluster serves as cofactor.

It is found in the cytoplasm. The catalysed reaction is N(6)-dimethylallyladenosine(37) in tRNA + (sulfur carrier)-SH + AH2 + 2 S-adenosyl-L-methionine = 2-methylsulfanyl-N(6)-dimethylallyladenosine(37) in tRNA + (sulfur carrier)-H + 5'-deoxyadenosine + L-methionine + A + S-adenosyl-L-homocysteine + 2 H(+). Its function is as follows. Catalyzes the methylthiolation of N6-(dimethylallyl)adenosine (i(6)A), leading to the formation of 2-methylthio-N6-(dimethylallyl)adenosine (ms(2)i(6)A) at position 37 in tRNAs that read codons beginning with uridine. This is tRNA-2-methylthio-N(6)-dimethylallyladenosine synthase from Pseudomonas fluorescens (strain Pf0-1).